Reading from the N-terminus, the 391-residue chain is ATP-sensitive inward rectifier potassium channel 1 (391 aa).

Residues 1–77 are Cytoplasmic-facing; sequence MGASERSVFR…IWTTVLDLKW (77 aa). The residue at position 44 (serine 44) is a Phosphoserine; by SGK1. The helical transmembrane segment at 78–102 threads the bilayer; sequence RYKMTVFITAFLGSWFLFGLLWYVV. Residues 103–127 lie on the Extracellular side of the membrane; sequence AYVHKDLPEFYPPDNRTPCVENING. The N-linked (GlcNAc...) asparagine glycan is linked to asparagine 117. Residues 128–139 constitute an intramembrane region (helical; Pore-forming); that stretch reads MTSAFLFSLETQ. Positions 140-146 form an intramembrane region, pore-forming; sequence VTIGYGF. Residues 141–146 carry the Selectivity filter motif; sequence TIGYGF. Over 147–155 the chain is Extracellular; sequence RFVTEQCAT. A helical membrane pass occupies residues 156–177; sequence AIFLLIFQSILGVIINSFMCGA. The Cytoplasmic portion of the chain corresponds to 178–391; the sequence is ILAKISRPKK…EVDETDDTQM (214 aa). Positions 180–207 are polyphosphoinositide (PIP2)-binding; that stretch reads AKISRPKKRAKTITFSKNAVISKRGGKL. Residue 223 to 230 coordinates ATP; the sequence is GSHIYGKL.

It belongs to the inward rectifier-type potassium channel (TC 1.A.2.1) family. KCNJ1 subfamily. In terms of assembly, interacts with SGK1 and SLC9A3R2/NHERF2. Phosphorylation at Ser-44 by SGK1 is necessary for its expression at the cell membrane. As to expression, mainly in kidney (renal cortex, medulla and papilla). In terms of tissue distribution, kidney.

Its subcellular location is the cell membrane. The enzyme catalyses K(+)(in) = K(+)(out). Its activity is regulated as follows. Inhibited by WNK3. Activated by phosphatidylinositol 4,5 biphosphate (PtdIns(4,5)P2). Its function is as follows. Inward rectifier potassium channels are characterized by a greater tendency to allow potassium to flow into the cell rather than out of it. Their voltage dependence is regulated by the concentration of extracellular potassium; as external potassium is raised, the voltage range of the channel opening shifts to more positive voltages. The inward rectification is mainly due to the blockage of outward current by internal magnesium. This channel is activated by internal ATP and can be blocked by external barium. In the kidney, probably plays a major role in potassium homeostasis. Inward rectifier potassium channels are characterized by a greater tendency to allow potassium to flow into the cell rather than out of it. Their voltage dependence is regulated by the concentration of extracellular potassium; as external potassium is raised, the voltage range of the channel opening shifts to more positive voltages. In Rattus norvegicus (Rat), this protein is ATP-sensitive inward rectifier potassium channel 1 (Kcnj1).